The sequence spans 149 residues: Large-conductance mechanosensitive channel (149 aa).

Transmembrane regions (helical) follow at residues 8–28 and 74–94; these read FIMRGSVLDLAVGVVIGSAFT and IGSVISALITFLITAFVLFLI.

This sequence belongs to the MscL family. Homopentamer.

It localises to the cell membrane. Its function is as follows. Channel that opens in response to stretch forces in the membrane lipid bilayer. May participate in the regulation of osmotic pressure changes within the cell. In Enterococcus faecalis (strain ATCC 700802 / V583), this protein is Large-conductance mechanosensitive channel.